The sequence spans 369 residues: Peptide chain release factor 2 (369 aa).

Gln252 is subject to N5-methylglutamine.

This sequence belongs to the prokaryotic/mitochondrial release factor family. In terms of processing, methylated by PrmC. Methylation increases the termination efficiency of RF2.

It is found in the cytoplasm. Peptide chain release factor 2 directs the termination of translation in response to the peptide chain termination codons UGA and UAA. The polypeptide is Peptide chain release factor 2 (Staphylococcus aureus (strain MRSA252)).